The sequence spans 243 residues: Probable transcriptional regulatory protein BDU_30 (243 aa).

Belongs to the TACO1 family.

The protein resides in the cytoplasm. This Borrelia duttonii (strain Ly) protein is Probable transcriptional regulatory protein BDU_30.